The primary structure comprises 172 residues: Lipoprotein signal peptidase (172 aa).

Transmembrane regions (helical) follow at residues 70–90 (ERWLLVAGTALIAAGIVAWIW) and 94–114 (AKGDVVALGLVLGGAIGNIAD). Catalysis depends on residues aspartate 123 and aspartate 142. Residues 134 to 154 (PFLVFNVADAAITIGVLILVL) traverse the membrane as a helical segment.

This sequence belongs to the peptidase A8 family.

Its subcellular location is the cell inner membrane. It catalyses the reaction Release of signal peptides from bacterial membrane prolipoproteins. Hydrolyzes -Xaa-Yaa-Zaa-|-(S,diacylglyceryl)Cys-, in which Xaa is hydrophobic (preferably Leu), and Yaa (Ala or Ser) and Zaa (Gly or Ala) have small, neutral side chains.. It participates in protein modification; lipoprotein biosynthesis (signal peptide cleavage). This protein specifically catalyzes the removal of signal peptides from prolipoproteins. This Rhizorhabdus wittichii (strain DSM 6014 / CCUG 31198 / JCM 15750 / NBRC 105917 / EY 4224 / RW1) (Sphingomonas wittichii) protein is Lipoprotein signal peptidase.